The following is a 355-amino-acid chain: F-box only protein 32 (355 aa).

The short motif at 62 to 67 is the Nuclear localization signal element; it reads KKRKKD. The Nuclear export signal motif lies at 169-173; that stretch reads LLQTL. An F-box domain is found at 223–271; that stretch reads LTITDLPVCLQLNIMQRLSDGRDLVSLGQAAPDLHVLSEDRLLWKRLCQ. The short motif at 280–295 is the Bipartite nuclear localization signal element; the sequence is RKRLILSDKGQLDWKK.

In terms of assembly, part of the SCF (SKP1-CUL1-F-box) E3 ubiquitin-protein ligase complex SCF(FBXO32) formed of CUL1, SKP1, RBX1 and FBXO32. Specifically expressed in cardiac and skeletal muscle.

The protein localises to the cytoplasm. The protein resides in the nucleus. The protein operates within protein modification; protein ubiquitination. Functionally, substrate recognition component of a SCF (SKP1-CUL1-F-box protein) E3 ubiquitin-protein ligase complex which mediates the ubiquitination and subsequent proteasomal degradation of target proteins. Probably recognizes and binds to phosphorylated target proteins during skeletal muscle atrophy. Recognizes TERF1. The sequence is that of F-box only protein 32 (Fbxo32) from Mus musculus (Mouse).